Consider the following 190-residue polypeptide: Glutathione peroxidase 2 (190 aa).

Residue U40 is part of the active site. A non-standard amino acid (selenocysteine) is located at residue U40.

This sequence belongs to the glutathione peroxidase family. In terms of assembly, homotetramer.

It is found in the cytoplasm. It localises to the cytosol. The catalysed reaction is 2 glutathione + H2O2 = glutathione disulfide + 2 H2O. The enzyme catalyses a hydroperoxy polyunsaturated fatty acid + 2 glutathione = a hydroxy polyunsaturated fatty acid + glutathione disulfide + H2O. It catalyses the reaction tert-butyl hydroperoxide + 2 glutathione = tert-butanol + glutathione disulfide + H2O. It carries out the reaction cumene hydroperoxide + 2 glutathione = 2-phenylpropan-2-ol + glutathione disulfide + H2O. The catalysed reaction is (13S)-hydroperoxy-(9Z,11E)-octadecadienoate + 2 glutathione = (13S)-hydroxy-(9Z,11E)-octadecadienoate + glutathione disulfide + H2O. The enzyme catalyses (5S)-hydroperoxy-(6E,8Z,11Z,14Z)-eicosatetraenoate + 2 glutathione = (5S)-hydroxy-(6E,8Z,11Z,14Z)-eicosatetraenoate + glutathione disulfide + H2O. It catalyses the reaction (12R)-hydroperoxy-(5Z,8Z,10E,14Z)-eicosatetraenoate + 2 glutathione = (12R)-hydroxy-(5Z,8Z,10E,14Z)-eicosatetraenoate + glutathione disulfide + H2O. It carries out the reaction (15S)-hydroperoxy-(5Z,8Z,11Z,13E)-eicosatetraenoate + 2 glutathione = (15S)-hydroxy-(5Z,8Z,11Z,13E)-eicosatetraenoate + glutathione disulfide + H2O. Its function is as follows. Catalyzes the reduction of hydroperoxides in a glutathione-dependent manner thus regulating cellular redox homeostasis. Can reduce small soluble hydroperoxides such as H2O2, cumene hydroperoxide and tert-butyl hydroperoxide, as well as several fatty acid-derived hydroperoxides. Cannot reduce phosphatidycholine hydroperoxide. The sequence is that of Glutathione peroxidase 2 (GPX2) from Pongo pygmaeus (Bornean orangutan).